Consider the following 147-residue polypeptide: 3-dehydroquinate dehydratase (147 aa).

Y23 serves as the catalytic Proton acceptor. Substrate contacts are provided by N74, H80, and D87. H100 acts as the Proton donor in catalysis. Residues 101–102 (LS) and R111 contribute to the substrate site.

This sequence belongs to the type-II 3-dehydroquinase family. As to quaternary structure, homododecamer.

It carries out the reaction 3-dehydroquinate = 3-dehydroshikimate + H2O. The protein operates within metabolic intermediate biosynthesis; chorismate biosynthesis; chorismate from D-erythrose 4-phosphate and phosphoenolpyruvate: step 3/7. Functionally, catalyzes a trans-dehydration via an enolate intermediate. The sequence is that of 3-dehydroquinate dehydratase from Glaesserella parasuis serovar 5 (strain SH0165) (Haemophilus parasuis).